The primary structure comprises 793 residues: ATP-dependent RNA helicase DRS1 (793 aa).

The disordered stretch occupies residues 1–208 (MADDFITTID…TTTDPTLPSS (208 aa)). A compositionally biased stretch (basic residues) spans 75-89 (KRGKPIRAFKDRKRK). 3 stretches are compositionally biased toward acidic residues: residues 94 to 114 (ATSE…NDDS), 122 to 144 (SEED…ENEI), and 152 to 184 (ESDE…EETA). Over residues 193-208 (FFSSDPTTTDPTLPSS) the composition is skewed to low complexity. Residues 207-235 (SSFTAMNLSRPLLRALTSLQFTAPTPIQA) carry the Q motif motif. The Helicase ATP-binding domain maps to 238–416 (IPLALLGRDI…KLSLDKPIRV (179 aa)). 251-258 (AVTGSGKT) is an ATP binding site. A DEAD box motif is present at residues 364–367 (DEAD). Positions 427 to 606 (GLTQEFVRIR…EFKDDIQEIL (180 aa)) constitute a Helicase C-terminal domain. The stretch at 560–630 (EADRKMLKAA…EIKKGQNMVE (71 aa)) forms a coiled coil. Residues 645–793 (QSGKEKQASK…KKGGKGKGRK (149 aa)) form a disordered region. 2 stretches are compositionally biased toward basic and acidic residues: residues 671–688 (SAEK…DGLS) and 726–740 (KITE…AGKG). A compositionally biased stretch (basic residues) spans 741-752 (KDKKKGKARRVT). Positions 761-771 (SEGKKSHEGMR) are enriched in basic and acidic residues. Residues 782 to 793 (GKKKGGKGKGRK) are compositionally biased toward basic residues.

The protein belongs to the DEAD box helicase family. DDX27/DRS1 subfamily. Associates with pre-ribosomal particles.

Its subcellular location is the nucleus. It is found in the nucleolus. The catalysed reaction is ATP + H2O = ADP + phosphate + H(+). Its function is as follows. ATP-binding RNA helicase involved in ribosome assembly. The polypeptide is ATP-dependent RNA helicase DRS1 (DRS1) (Cryptococcus neoformans var. neoformans serotype D (strain JEC21 / ATCC MYA-565) (Filobasidiella neoformans)).